The sequence spans 446 residues: Xanthone prenyltransferase A (446 aa).

Arg-113, Lys-199, Tyr-201, Arg-263, Lys-265, Tyr-267, Tyr-369, and Tyr-440 together coordinate dimethylallyl diphosphate.

Belongs to the tryptophan dimethylallyltransferase family.

Its pathway is secondary metabolite biosynthesis. Xanthone prenyltransferase involved in the conversion of monodictyphenone to the prenyl xanthones such as emericellin, shamixanthone and epishamixanthone. Monodictyphenone is first converted to variecoxanthone A via a paeciloxanthone intermediate by the consecutive actions of the FAD-dependent monooxygenase mdpD and the xanthone prenyltransferase xptB. XptB catalyzes regular O-prenylation at the hydroxy group of C-7 of the xanthone ring. Variecoxanthone A is further prenylated to emericellin by xptA before being reduced to shamixanthone and epishamixanthone by the dehydrogenase xptC. This chain is Xanthone prenyltransferase A, found in Emericella nidulans (strain FGSC A4 / ATCC 38163 / CBS 112.46 / NRRL 194 / M139) (Aspergillus nidulans).